We begin with the raw amino-acid sequence, 367 residues long: Alanine racemase (367 aa).

Catalysis depends on Lys40, which acts as the Proton acceptor; specific for D-alanine. Lys40 is subject to N6-(pyridoxal phosphate)lysine. Arg136 contributes to the substrate binding site. Catalysis depends on Tyr263, which acts as the Proton acceptor; specific for L-alanine. Position 310 (Met310) interacts with substrate.

This sequence belongs to the alanine racemase family. Pyridoxal 5'-phosphate is required as a cofactor.

The catalysed reaction is L-alanine = D-alanine. It functions in the pathway amino-acid biosynthesis; D-alanine biosynthesis; D-alanine from L-alanine: step 1/1. Catalyzes the interconversion of L-alanine and D-alanine. May also act on other amino acids. The polypeptide is Alanine racemase (alr) (Streptococcus thermophilus (strain ATCC BAA-491 / LMD-9)).